The primary structure comprises 527 residues: Peptide chain release factor 3 (527 aa).

A tr-type G domain is found at 9-277; that stretch reads AKRRTFAIIS…AVVDWAPRPL (269 aa). GTP is bound by residues 18–25, 86–90, and 140–143; these read SHPDAGKT, DTPGH, and NKLD.

The protein belongs to the TRAFAC class translation factor GTPase superfamily. Classic translation factor GTPase family. PrfC subfamily.

It localises to the cytoplasm. Its function is as follows. Increases the formation of ribosomal termination complexes and stimulates activities of RF-1 and RF-2. It binds guanine nucleotides and has strong preference for UGA stop codons. It may interact directly with the ribosome. The stimulation of RF-1 and RF-2 is significantly reduced by GTP and GDP, but not by GMP. This is Peptide chain release factor 3 from Pseudomonas fluorescens (strain SBW25).